The sequence spans 249 residues: Triosephosphate isomerase (249 aa).

8–10 (NWK) is a substrate binding site. Residue His95 is the Electrophile of the active site. The Proton acceptor role is filled by Glu163. Gly169 and Ser209 together coordinate substrate.

This sequence belongs to the triosephosphate isomerase family. In terms of assembly, homodimer.

It is found in the cytoplasm. The catalysed reaction is D-glyceraldehyde 3-phosphate = dihydroxyacetone phosphate. Its pathway is carbohydrate biosynthesis; gluconeogenesis. The protein operates within carbohydrate degradation; glycolysis; D-glyceraldehyde 3-phosphate from glycerone phosphate: step 1/1. Its function is as follows. Involved in the gluconeogenesis. Catalyzes stereospecifically the conversion of dihydroxyacetone phosphate (DHAP) to D-glyceraldehyde-3-phosphate (G3P). The sequence is that of Triosephosphate isomerase from Orientia tsutsugamushi (strain Ikeda) (Rickettsia tsutsugamushi).